A 288-amino-acid polypeptide reads, in one-letter code: HTH-type transcriptional regulator CzcR (288 aa).

Residues 1 to 58 (MELRDLQIFQSVADQGSVSSAAKELNYVQSNVTTRIKQLENELKTPLFYRHKRGMTLT) enclose the HTH lysR-type domain. Residues 18 to 37 (VSSAAKELNYVQSNVTTRIK) constitute a DNA-binding region (H-T-H motif).

It belongs to the LysR transcriptional regulatory family.

This is HTH-type transcriptional regulator CzcR (czcR) from Bacillus thuringiensis subsp. konkukian (strain 97-27).